The following is a 477-amino-acid chain: 3-succinoylsemialdehyde-pyridine dehydrogenase (477 aa).

NAD(+) is bound at residue 202–208 (GDGPGVG). Catalysis depends on residues glutamate 246 and cysteine 280.

It belongs to the aldehyde dehydrogenase family.

It carries out the reaction 4-oxo-4-(pyridin-3-yl)butanal + NADP(+) + H2O = 4-oxo-4-(pyridin-3-yl)butanoate + NADPH + 2 H(+). It functions in the pathway alkaloid degradation; nicotine degradation. Catalyzes the dehydrogenation of 3-succinoylsemialdehyde-pyridine to 3-succinoyl-pyridine in the nicotine degradation pathway. The sequence is that of 3-succinoylsemialdehyde-pyridine dehydrogenase (ald) from Pseudomonas sp.